Reading from the N-terminus, the 255-residue chain is Small ribosomal subunit protein uS2 (255 aa).

It belongs to the universal ribosomal protein uS2 family.

The protein is Small ribosomal subunit protein uS2 of Streptococcus pyogenes serotype M28 (strain MGAS6180).